The chain runs to 127 residues: MRHQKSGRKFNRTSAHREAMFRNMAASLFKHELIKTTLPKAKELRRVAEPLITIGKVDGVANRRLAFARLRDKEAVGKLFVELGPRYATRPGGYLRILKAGFRAGDNAPMAYVELVDRPVVAEEVSE.

This sequence belongs to the bacterial ribosomal protein bL17 family. As to quaternary structure, part of the 50S ribosomal subunit. Contacts protein L32.

In Xanthomonas campestris pv. campestris (strain 8004), this protein is Large ribosomal subunit protein bL17.